We begin with the raw amino-acid sequence, 385 residues long: Mitochondrial fission regulator 2 (385 aa).

Ser2 bears the N-acetylserine mark. Phosphoserine is present on Ser119. Positions 195–268 (SVDPDQLPGS…SHHSKSQRNK (74 aa)) are disordered. Positions 207-216 (SPPPPPPLPP) are enriched in pro residues. The span at 231-257 (PGSNNICDSDNPATEMSKQNPAANKTN) shows a compositional bias: polar residues. Phosphoserine occurs at positions 291 and 328. Residues 331–363 (KENRSWESSPFSSPETSRFGHHISQSEGQRTKE) are disordered. Over residues 336–346 (WESSPFSSPET) the composition is skewed to polar residues.

Belongs to the MTFR1 family.

Its subcellular location is the mitochondrion. Functionally, may play a role in mitochondrial aerobic respiration essentially in the testis. Can also promote mitochondrial fission. The protein is Mitochondrial fission regulator 2 (MTFR2) of Homo sapiens (Human).